The following is a 399-amino-acid chain: Stearoyl-[acyl-carrier-protein] 9-desaturase, seed specific, chloroplastic (399 aa).

The transit peptide at 1–34 directs the protein to the chloroplast; sequence MALKFNPLVSQPYKLASSARPPVSTFRSPKFLCL. Fe cation-binding residues include E141, E179, H182, E232, E265, and H268.

This sequence belongs to the fatty acid desaturase type 2 family. In terms of assembly, homodimer. The cofactor is Fe(2+). In terms of tissue distribution, developing seeds.

Its subcellular location is the plastid. It localises to the chloroplast. It catalyses the reaction octadecanoyl-[ACP] + 2 reduced [2Fe-2S]-[ferredoxin] + O2 + 2 H(+) = (9Z)-octadecenoyl-[ACP] + 2 oxidized [2Fe-2S]-[ferredoxin] + 2 H2O. It participates in lipid metabolism; fatty acid metabolism. Converts stearoyl-ACP to oleoyl-ACP by introduction of a cis double bond between carbons Delta(9) and Delta(10) of the acyl chain. The sequence is that of Stearoyl-[acyl-carrier-protein] 9-desaturase, seed specific, chloroplastic from Brassica napus (Rape).